The chain runs to 365 residues: Aminomethyltransferase (365 aa).

Belongs to the GcvT family. The glycine cleavage system is composed of four proteins: P, T, L and H.

It carries out the reaction N(6)-[(R)-S(8)-aminomethyldihydrolipoyl]-L-lysyl-[protein] + (6S)-5,6,7,8-tetrahydrofolate = N(6)-[(R)-dihydrolipoyl]-L-lysyl-[protein] + (6R)-5,10-methylene-5,6,7,8-tetrahydrofolate + NH4(+). Its function is as follows. The glycine cleavage system catalyzes the degradation of glycine. The protein is Aminomethyltransferase of Serratia proteamaculans (strain 568).